The following is a 638-amino-acid chain: Threonine--tRNA ligase (638 aa).

Positions methionine 1–threonine 62 constitute a TGS domain. The tract at residues aspartate 246–proline 537 is catalytic. Residues cysteine 337, histidine 388, and histidine 514 each contribute to the Zn(2+) site.

The protein belongs to the class-II aminoacyl-tRNA synthetase family. Homodimer. Requires Zn(2+) as cofactor.

The protein resides in the cytoplasm. It carries out the reaction tRNA(Thr) + L-threonine + ATP = L-threonyl-tRNA(Thr) + AMP + diphosphate + H(+). Catalyzes the attachment of threonine to tRNA(Thr) in a two-step reaction: L-threonine is first activated by ATP to form Thr-AMP and then transferred to the acceptor end of tRNA(Thr). Also edits incorrectly charged L-seryl-tRNA(Thr). The polypeptide is Threonine--tRNA ligase (Leptospira interrogans serogroup Icterohaemorrhagiae serovar copenhageni (strain Fiocruz L1-130)).